A 523-amino-acid chain; its full sequence is GMP synthase [glutamine-hydrolyzing] (523 aa).

The Glutamine amidotransferase type-1 domain maps to K8 to K205. C85 serves as the catalytic Nucleophile. Catalysis depends on residues H179 and E181. Residues W206 to R398 form the GMPS ATP-PPase domain. S233 to S239 is an ATP binding site.

Homodimer.

It catalyses the reaction XMP + L-glutamine + ATP + H2O = GMP + L-glutamate + AMP + diphosphate + 2 H(+). It functions in the pathway purine metabolism; GMP biosynthesis; GMP from XMP (L-Gln route): step 1/1. In terms of biological role, catalyzes the synthesis of GMP from XMP. This Actinobacillus pleuropneumoniae serotype 5b (strain L20) protein is GMP synthase [glutamine-hydrolyzing].